Here is a 690-residue protein sequence, read N- to C-terminus: Molting protein mlt-10 (690 aa).

The first 18 residues, 1–18, serve as a signal peptide directing secretion; it reads MRNLNLILFTALAAVTYA. Residues Asn-42 and Asn-204 are each glycosylated (N-linked (GlcNAc...) asparagine). Residues 219–285 adopt a coiled-coil conformation; the sequence is IKKLGEEAKR…MRKKEADEIR (67 aa). Asn-305 and Asn-415 each carry an N-linked (GlcNAc...) asparagine glycan. 5 consecutive transmembrane segments (helical) span residues 514 to 534, 544 to 564, 579 to 599, 618 to 638, and 643 to 663; these read PFIL…FIVL, LSPA…PLIL, FSPI…PGVF, VFTP…TPMV, and ILSP…FAVV.

Belongs to the mlt-10-like family. Expressed in the major body hypodermal syncytium (Hyp7), the dorsal and ventral ridges of the hypodermis, hypodermal cells in the head and tail, and the pharyngeal myoepithelium, but not the lateral seam cells.

Its subcellular location is the membrane. The protein resides in the secreted. In terms of biological role, required for the efficient removal of larval cuticles during the molting cycle as well as the synthesis of new cuticles. The protein is Molting protein mlt-10 of Caenorhabditis elegans.